The chain runs to 118 residues: Ig heavy chain V region X24 (118 aa).

The Ig-like domain maps to 1-111 (EVKLLESGGG…GYFDYWGQGT (111 aa)).

In Mus musculus (Mouse), this protein is Ig heavy chain V region X24.